The sequence spans 75 residues: UPF0270 protein PSPTO_1630 (75 aa).

Belongs to the UPF0270 family.

This chain is UPF0270 protein PSPTO_1630, found in Pseudomonas syringae pv. tomato (strain ATCC BAA-871 / DC3000).